The chain runs to 113 residues: MSFRLTRNLRVLKPFDYKTIFKHGKIIKGQYWQVLARKIDTPEPRLGLAISKKVHRLAIDRNKTKRIARETFRTHQNDLNHWEFIVMAEHSKPAKNSIMTNDLLHLFKKIITY.

Belongs to the RnpA family. Consists of a catalytic RNA component (M1 or rnpB) and a protein subunit.

It carries out the reaction Endonucleolytic cleavage of RNA, removing 5'-extranucleotides from tRNA precursor.. RNaseP catalyzes the removal of the 5'-leader sequence from pre-tRNA to produce the mature 5'-terminus. It can also cleave other RNA substrates such as 4.5S RNA. The protein component plays an auxiliary but essential role in vivo by binding to the 5'-leader sequence and broadening the substrate specificity of the ribozyme. This is Ribonuclease P protein component from Vesicomyosocius okutanii subsp. Calyptogena okutanii (strain HA).